Consider the following 235-residue polypeptide: UPF0714 protein YmaC (235 aa).

A helical transmembrane segment spans residues 5-24 (LLNVILVLAIVLFLRYVHYS).

This sequence belongs to the UPF0714 family.

The protein resides in the cell membrane. The sequence is that of UPF0714 protein YmaC (ymaC) from Bacillus subtilis (strain 168).